The sequence spans 345 residues: S-adenosylmethionine:tRNA ribosyltransferase-isomerase (345 aa).

It belongs to the QueA family. Monomer.

It is found in the cytoplasm. It catalyses the reaction 7-aminomethyl-7-carbaguanosine(34) in tRNA + S-adenosyl-L-methionine = epoxyqueuosine(34) in tRNA + adenine + L-methionine + 2 H(+). It participates in tRNA modification; tRNA-queuosine biosynthesis. Functionally, transfers and isomerizes the ribose moiety from AdoMet to the 7-aminomethyl group of 7-deazaguanine (preQ1-tRNA) to give epoxyqueuosine (oQ-tRNA). The protein is S-adenosylmethionine:tRNA ribosyltransferase-isomerase of Thermodesulfovibrio yellowstonii (strain ATCC 51303 / DSM 11347 / YP87).